A 130-amino-acid polypeptide reads, in one-letter code: Small ribosomal subunit protein uS9 (130 aa).

This sequence belongs to the universal ribosomal protein uS9 family.

The sequence is that of Small ribosomal subunit protein uS9 from Pseudomonas putida (strain W619).